A 182-amino-acid chain; its full sequence is UPF0423 protein BRA0381/BS1330_II0378 (182 aa).

A signal peptide spans 1 to 24; it reads MKNLFRTAALMVPLSLALAYGAQA.

Belongs to the UPF0423 family.

In Brucella suis biovar 1 (strain 1330), this protein is UPF0423 protein BRA0381/BS1330_II0378.